We begin with the raw amino-acid sequence, 274 residues long: Putative phosphoenolpyruvate synthase regulatory protein (274 aa).

155–162 (GVSRSGKT) serves as a coordination point for ADP.

Belongs to the pyruvate, phosphate/water dikinase regulatory protein family. PSRP subfamily.

It carries out the reaction [pyruvate, water dikinase] + ADP = [pyruvate, water dikinase]-phosphate + AMP + H(+). The catalysed reaction is [pyruvate, water dikinase]-phosphate + phosphate + H(+) = [pyruvate, water dikinase] + diphosphate. Functionally, bifunctional serine/threonine kinase and phosphorylase involved in the regulation of the phosphoenolpyruvate synthase (PEPS) by catalyzing its phosphorylation/dephosphorylation. The sequence is that of Putative phosphoenolpyruvate synthase regulatory protein from Laribacter hongkongensis (strain HLHK9).